The sequence spans 278 residues: 2-dehydro-3-deoxyphosphooctonate aldolase (278 aa).

It belongs to the KdsA family.

It localises to the cytoplasm. It carries out the reaction D-arabinose 5-phosphate + phosphoenolpyruvate + H2O = 3-deoxy-alpha-D-manno-2-octulosonate-8-phosphate + phosphate. The protein operates within carbohydrate biosynthesis; 3-deoxy-D-manno-octulosonate biosynthesis; 3-deoxy-D-manno-octulosonate from D-ribulose 5-phosphate: step 2/3. Its pathway is bacterial outer membrane biogenesis; lipopolysaccharide biosynthesis. The chain is 2-dehydro-3-deoxyphosphooctonate aldolase from Koribacter versatilis (strain Ellin345).